Reading from the N-terminus, the 436-residue chain is MGQVLPLVTRQGDRIAIVSGLRTPFARQATAFHGIPAVDLGKMVVGELLARSEIPAEVIEQLVFGQVVQMPEAPNIAREIVLGTGMNVHTDAYSVSRACATSFQAVANVVESLMAGTIRAGIAGGADSSSVLPIGVSKKLARVLVDVNKARTMSQRLKLFSRLRLRDLMPVPPAVAEYSTGLRMGDTAEQMAKTYGITREQQDALAHRSHQRAAQAWSDGKLKEEVMTAFIPPYKQLLAEDNNIRGNSSLADFAKLRPAFDRKHGTVTAANSTPLTDGAAAVILMTESRAKELGLVPLGYLRSYAFTAIDVWQDMLLGPAWSTPLALERAGLTMADLTLIDMHEAFAAQTLANIQLLGSERFAREALGRAHATGEVDDSKFNVLGGSIAYGHPFAATGARMITQTLHELRRRGGGFGLVTACAAGGLGAAMVLEAE.

Cysteine 99 acts as the Acyl-thioester intermediate in catalysis. Active-site proton acceptor residues include histidine 392 and cysteine 422.

It belongs to the thiolase-like superfamily. Thiolase family. Heterotetramer of two alpha chains (FadJ) and two beta chains (FadI).

The protein localises to the cytoplasm. The catalysed reaction is an acyl-CoA + acetyl-CoA = a 3-oxoacyl-CoA + CoA. Its pathway is lipid metabolism; fatty acid beta-oxidation. Catalyzes the final step of fatty acid oxidation in which acetyl-CoA is released and the CoA ester of a fatty acid two carbons shorter is formed. In Escherichia coli O157:H7, this protein is 3-ketoacyl-CoA thiolase.